We begin with the raw amino-acid sequence, 79 residues long: Large ribosomal subunit protein uL24 (79 aa).

This sequence belongs to the universal ribosomal protein uL24 family. Part of the 50S ribosomal subunit.

Functionally, one of two assembly initiator proteins, it binds directly to the 5'-end of the 23S rRNA, where it nucleates assembly of the 50S subunit. In terms of biological role, one of the proteins that surrounds the polypeptide exit tunnel on the outside of the subunit. This is Large ribosomal subunit protein uL24 from Lactobacillus johnsonii (strain CNCM I-12250 / La1 / NCC 533).